A 142-amino-acid chain; its full sequence is Large ribosomal subunit protein uL11 (142 aa).

It belongs to the universal ribosomal protein uL11 family. In terms of assembly, part of the ribosomal stalk of the 50S ribosomal subunit. Interacts with L10 and the large rRNA to form the base of the stalk. L10 forms an elongated spine to which L12 dimers bind in a sequential fashion forming a multimeric L10(L12)X complex. One or more lysine residues are methylated.

Its function is as follows. Forms part of the ribosomal stalk which helps the ribosome interact with GTP-bound translation factors. The chain is Large ribosomal subunit protein uL11 from Acinetobacter baumannii (strain AB307-0294).